The sequence spans 207 residues: N-(5'-phosphoribosyl)anthranilate isomerase (207 aa).

It belongs to the TrpF family.

It carries out the reaction N-(5-phospho-beta-D-ribosyl)anthranilate = 1-(2-carboxyphenylamino)-1-deoxy-D-ribulose 5-phosphate. It participates in amino-acid biosynthesis; L-tryptophan biosynthesis; L-tryptophan from chorismate: step 3/5. The protein is N-(5'-phosphoribosyl)anthranilate isomerase of Staphylococcus epidermidis (strain ATCC 35984 / DSM 28319 / BCRC 17069 / CCUG 31568 / BM 3577 / RP62A).